The sequence spans 420 residues: Ketoreductase sphF (420 aa).

The interval 1 to 21 (MLERPSFPRLGAGTRHHRPLG) is disordered. Residues 29–49 (WLLAFTGISGIAGMMIPYVPW) form a helical membrane-spanning segment. The segment at 275 to 298 (RQKRSPSPGRHPALGSPPAQLRQD) is disordered.

Its subcellular location is the membrane. The enzyme catalyses 3-oxopresphingofungin + NADPH + 2 H(+) = presphingofungin + NADP(+). It participates in secondary metabolite biosynthesis. In terms of biological role, ketoreductase; part of the gene cluster that mediates the biosynthesis of sphingofungins, bioactive molecules acting as sphingolipid inhibitors via inhibiting serine palmitoyl transferase (SPT). Within the pathway, sphF catalyzes the reduction of the C-3 ketone of 3-keto-presphingofungin to produce presphingofungin. Sphingofungin biosynthesis starts with the PKS sphB that produces an C18 polyketide precursor 3-hydroxyoctadeca-4,10-dienoyl-ACP containing one delta-6 desaturation and one delta-12 desaturation. The aminoacyl transferase sphA uses the sphB product to produce 3-keto-presphingofungin by adding an aminomalonate molecule. SphF then reduces the C-3 ketone of 3-keto-presphingofungin which leads to presphingofungin. The cytochrome P450 monooxygenase sphH converts presphingofungin into sphingofungin B1 which is further converted to sphingofungin B by the dioxygenase sphC. SphC is also able to convert presphingofungin into sphingofungin B2. The acetyltransferase sphE acetylates sphingofungin B to produce sphingofungin C, but can also convert sphingofungin B1 into sphingofungin C1 and sphingofungin B2 into sphingofungin C2. Finally, sphingofungin C can be spontaneously converted into sphingofungin D. This Aspergillus fumigatus (strain CBS 144.89 / FGSC A1163 / CEA10) (Neosartorya fumigata) protein is Ketoreductase sphF.